Reading from the N-terminus, the 106-residue chain is Iron-sulfur cluster assembly protein CyaY (106 aa).

This sequence belongs to the frataxin family.

In terms of biological role, involved in iron-sulfur (Fe-S) cluster assembly. May act as a regulator of Fe-S biogenesis. This is Iron-sulfur cluster assembly protein CyaY from Dickeya chrysanthemi (Pectobacterium chrysanthemi).